Here is a 547-residue protein sequence, read N- to C-terminus: Chaperonin GroEL (547 aa).

Residues 30–33, K51, 87–91, G415, and D496 each bind ATP; these read TLGP and DGTTT.

The protein belongs to the chaperonin (HSP60) family. In terms of assembly, forms a cylinder of 14 subunits composed of two heptameric rings stacked back-to-back. Interacts with the co-chaperonin GroES.

The protein localises to the cytoplasm. It carries out the reaction ATP + H2O + a folded polypeptide = ADP + phosphate + an unfolded polypeptide.. Its function is as follows. Together with its co-chaperonin GroES, plays an essential role in assisting protein folding. The GroEL-GroES system forms a nano-cage that allows encapsulation of the non-native substrate proteins and provides a physical environment optimized to promote and accelerate protein folding. This is Chaperonin GroEL from Chlorobium limicola (strain DSM 245 / NBRC 103803 / 6330).